Here is a 710-residue protein sequence, read N- to C-terminus: Prolyl endopeptidase (710 aa).

The residue at position 1 (M1) is an N-acetylmethionine. An N6-acetyllysine modification is found at K157. Active-site charge relay system residues include S554, D641, and H680.

This sequence belongs to the peptidase S9A family. Expressed in all tissues tested: uterus, kidney, heart, lung, small intestine, smooth muscle, liver, spleen, thymus, adrenal, pituitary and whole brain.

The protein resides in the cytoplasm. The enzyme catalyses Hydrolysis of Pro-|-Xaa &gt;&gt; Ala-|-Xaa in oligopeptides.. Its activity is regulated as follows. Inhibited by DFP, Z-Pro-prolinal and poststatin, but not by PMSF, SBTI, EDTA, leupeptin, E-64 and pepstatin. Cleaves peptide bonds on the C-terminal side of prolyl residues within peptides that are up to approximately 30 amino acids long. Has high activity on the succinyl- (suc-) peptide-4-methylcoumaryl-7-amide (MCA) substrates suc-Gly-Pro-Leu-Gly-Pro-MCA, suc-Gly-Pro-MCA and suc-Ala-Ala-Ala-MCA. This is Prolyl endopeptidase from Rattus norvegicus (Rat).